Consider the following 242-residue polypeptide: Phosphatidylcholine synthase (242 aa).

The Cytoplasmic portion of the chain corresponds to 1-15; that stretch reads MKIFNYKRVPYAEMR. Residues 16–36 traverse the membrane as a helical segment; it reads AFSVHILTASGSFLAFLGVVA. The Periplasmic portion of the chain corresponds to 37 to 41; it reads AAEHR. Residues 42–62 traverse the membrane as a helical segment; sequence FIDMFWWLGLALLVDGIDGPI. Residues 63 to 76 lie on the Cytoplasmic side of the membrane; sequence ARKVRVKEVLPNWS. The chain crosses the membrane as a helical span at residues 77 to 97; it reads GDTLDNIIDYVTYVLLPAFAL. Residues 98-100 are Periplasmic-facing; sequence YQS. The helical transmembrane segment at 101-121 threads the bilayer; sequence GMIGEPWSFVAAGMIVVSSAI. Topologically, residues 122-133 are cytoplasmic; that stretch reads YYADMGMKTDEY. Residues 134–154 traverse the membrane as a helical segment; that stretch reads FFSGFPVVWNMIVFTLFVIDA. Topologically, residues 155 to 159 are periplasmic; that stretch reads SATTA. Residues 160-180 traverse the membrane as a helical segment; that stretch reads LTVVIVSVVLTFLPINFLHPV. At 181-187 the chain is on the cytoplasmic side; it reads RVKRLRP. The chain crosses the membrane as a helical span at residues 188–208; sequence LNLGVFFLWSALGIFSLLMHF. Residues 209–214 are Periplasmic-facing; it reads DTPEWA. The helical transmembrane segment at 215–235 threads the bilayer; that stretch reads LILFIVTGAYLYVIGAVLQFF. Topologically, residues 236–242 are cytoplasmic; it reads PALGRET.

The protein belongs to the CDP-alcohol phosphatidyltransferase class-I family. Requires Mn(2+) as cofactor.

Its subcellular location is the cell inner membrane. It catalyses the reaction a CDP-1,2-diacyl-sn-glycerol + choline = a 1,2-diacyl-sn-glycero-3-phosphocholine + CMP + H(+). In terms of biological role, condenses choline with CDP-diglyceride to produce phosphatidylcholine and CMP. The polypeptide is Phosphatidylcholine synthase (Rhizobium johnstonii (strain DSM 114642 / LMG 32736 / 3841) (Rhizobium leguminosarum bv. viciae)).